Consider the following 308-residue polypeptide: D-alanine--D-alanine ligase (308 aa).

In terms of domain architecture, ATP-grasp spans K105–D302. Residue D133 to D188 coordinates ATP. 3 residues coordinate Mg(2+): D256, E269, and N271.

This sequence belongs to the D-alanine--D-alanine ligase family. Mg(2+) serves as cofactor. It depends on Mn(2+) as a cofactor.

The protein resides in the cytoplasm. It carries out the reaction 2 D-alanine + ATP = D-alanyl-D-alanine + ADP + phosphate + H(+). The protein operates within cell wall biogenesis; peptidoglycan biosynthesis. Its function is as follows. Cell wall formation. The protein is D-alanine--D-alanine ligase of Anaeromyxobacter dehalogenans (strain 2CP-C).